The primary structure comprises 416 residues: Keratin, type I cuticular Ha1 (416 aa).

Residues 2-56 are head; that stretch reads PYNCCLPALSCRTSCSSRPCVPPSCHGCTLPGACNIPANVGNCNWFCEGSFNGNE. The region spanning 56–367 is the IF rod domain; sequence EKETMQFLND…GLLESEDCKL (312 aa). The coil 1A stretch occupies residues 57–91; the sequence is KETMQFLNDRLASYMEKVRQLERENAELECRIQER. The linker 1 stretch occupies residues 92–102; it reads NQQQDPLVCPA. The interval 103 to 203 is coil 1B; the sequence is YQAYFRTIEE…HEEEVNTLRC (101 aa). The segment at 204–219 is linker 12; sequence QLGDRLNVEVDAAPTV. The segment at 220 to 363 is coil 2; sequence DLNRVLNETR…NTYRGLLESE (144 aa). The tail stretch occupies residues 364-416; sequence DCKLPCNPCATSNACGKPIGPCVSNPCVPCPPPAPCTPCVPRPRCGPCNSFVR.

The protein belongs to the intermediate filament family.

The polypeptide is Keratin, type I cuticular Ha1 (Krt31) (Mus musculus (Mouse)).